The chain runs to 163 residues: Photosystem II extrinsic protein V (163 aa).

The signal sequence occupies residues methionine 1–alanine 26. 4 residues coordinate heme c: cysteine 63, cysteine 66, histidine 67, and methionine 130.

The protein belongs to the cytochrome c family. PsbV subfamily. PSII is composed of 1 copy each of membrane proteins PsbA, PsbB, PsbC, PsbD, PsbE, PsbF, PsbH, PsbI, PsbJ, PsbK, PsbL, PsbM, PsbT, PsbY, PsbZ, Psb30/Ycf12, at least 3 peripheral proteins of the oxygen-evolving complex and a large number of cofactors. It forms dimeric complexes. Requires heme c as cofactor.

The protein resides in the plastid. It localises to the chloroplast thylakoid membrane. Its function is as follows. One of the extrinsic, lumenal subunits of photosystem II (PSII). PSII is a light-driven water plastoquinone oxidoreductase, using light energy to abstract electrons from H(2)O, generating a proton gradient subsequently used for ATP formation. The extrinsic proteins stabilize the structure of photosystem II oxygen-evolving complex (OEC), the ion environment of oxygen evolution and protect the OEC against heat-induced inactivation. In Thalassiosira pseudonana (Marine diatom), this protein is Photosystem II extrinsic protein V.